A 390-amino-acid polypeptide reads, in one-letter code: uncharacterized protein (390 aa).

Belongs to the peptidase M24 family.

This is an uncharacterized protein from Sinorhizobium fredii (strain NBRC 101917 / NGR234).